The primary structure comprises 246 residues: Major prion protein (246 aa).

Positions 1–15 are cleaved as a signal peptide; it reads MLVLFVATWSDLGLC. The tract at residues 16 to 223 is interaction with GRB2, ERI3 and SYN1; sequence KKRPKPGGWN…ESQAYYQRGS (208 aa). The tract at residues 18–102 is disordered; it reads RPKPGGWNTG…HKPSKPKTSM (85 aa). Tandem repeats lie at residues 44-52, 53-60, 61-68, 69-76, and 77-84. The interval 44-84 is 5 X 8 AA tandem repeats of P-H-G-G-G-W-G-Q; sequence PQGGGGWGQPHGGGWGQPHGGGWGQPHGGGWGQPHGGGWGQ. Over residues 45–88 the composition is skewed to gly residues; it reads QGGGGWGQPHGGGWGQPHGGGWGQPHGGGWGQPHGGGWGQGGGT. 12 residues coordinate Cu(2+): His-54, Gly-55, Gly-56, His-62, Gly-63, Gly-64, His-70, Gly-71, Gly-72, His-78, Gly-79, and Gly-80. The span at 91 to 102 shows a compositional bias: basic residues; it reads QWHKPSKPKTSM. A disulfide bridge links Cys-172 with Cys-207. Residues Asn-174 and Asn-190 are each glycosylated (N-linked (GlcNAc...) asparagine). A lipid anchor (GPI-anchor amidated serine) is attached at Ser-223. Residues 224-246 constitute a propeptide, removed in mature form; the sequence is SMVLFSSPPVILLISFLIFLIVG.

Belongs to the prion family. Monomer and homodimer. Has a tendency to aggregate into amyloid fibrils containing a cross-beta spine, formed by a steric zipper of superposed beta-strands. Soluble oligomers may represent an intermediate stage on the path to fibril formation. Copper binding may promote oligomerization. Interacts with GRB2, APP, ERI3/PRNPIP and SYN1. Mislocalized cytosolically exposed PrP interacts with MGRN1; this interaction alters MGRN1 subcellular location and causes lysosomal enlargement. Interacts with KIAA1191.

It is found in the cell membrane. The protein resides in the golgi apparatus. Its function is as follows. Its primary physiological function is unclear. Has cytoprotective activity against internal or environmental stresses. May play a role in neuronal development and synaptic plasticity. May be required for neuronal myelin sheath maintenance. May play a role in iron uptake and iron homeostasis. Soluble oligomers are toxic to cultured neuroblastoma cells and induce apoptosis (in vitro). Association with GPC1 (via its heparan sulfate chains) targets PRNP to lipid rafts. Also provides Cu(2+) or Zn(2+) for the ascorbate-mediated GPC1 deaminase degradation of its heparan sulfate side chains. This Cercopithecus mona (Mona monkey) protein is Major prion protein (PRNP).